The chain runs to 595 residues: Leiomodin-1 (595 aa).

Disordered stretches follow at residues 1–322 (MSKV…KVKN) and 467–568 (DKQR…QEKN). Serine 12 carries the post-translational modification Phosphoserine. Residues 27 to 40 (EEMEELEKELDVVD) show a composition bias toward acidic residues. Basic and acidic residues-rich tracts occupy residues 72–105 (CEKESKKIIQREMSVDESKQVGRKTDAKNGEDKG), 117–127 (QDSDVGKEPKK), 134–193 (FSRD…EKTG), 201–224 (SRDKDKKREEVKEPSKKEEVKLTA), 232–251 (RQEDGKQKESREDRDKKPEV), 259–289 (RDSRKEDEKVKKEETQPDKGVREEGKTREKQ), 467–476 (DKQRQKRLQE), and 484–493 (SGEKKDRLEV). Phosphoserine is present on serine 85. Phosphoserine is present on serine 135. 8 repeat units span residues 165–180 (AAVDRKEAGKDGREER), 181–196 (AAATTKKEEEKTGSVR), 197–212 (NAGLSRDKDKKREEVK), 213–227 (EPSKKEEVKLTAENR), 228–243 (STVGRQEDGKQKESRE), 244–257 (DRDKKPEVKGIGCG), 258–273 (SRDSRKEDEKVKKEET), and 274–288 (QPDKGVREEGKTREK). An 8 X approximate tandem repeats region spans residues 165–288 (AAVDRKEAGK…VREEGKTREK (124 aa)). Pro residues-rich tracts occupy residues 503–513 (SPKPSPQPSPK) and 527–538 (AAPPPPPPPLAP). Residues 503-522 (SPKPSPQPSPKSAPKNSPKK) are 5 X 4 AA approximate tandem repeats. The residue at position 550 (serine 550) is a Phosphoserine. One can recognise a WH2 domain in the interval 569–588 (SRDQLLAAIRSSNLKQLKKV).

Detected in smooth muscle, in stomach and uterus, blood vessel wall, and in slow fibers in extraocular muscle, urinary bladder and sternothyroid muscle (at protein level).

It localises to the cytoplasm. The protein localises to the myofibril. Its subcellular location is the sarcomere. It is found in the cytoskeleton. In terms of biological role, required for proper contractility of visceral smooth muscle cells. Mediates nucleation of actin filaments. This Rattus norvegicus (Rat) protein is Leiomodin-1.